We begin with the raw amino-acid sequence, 568 residues long: Oxygen-dependent choline dehydrogenase (568 aa).

8–37 provides a ligand contact to FAD; the sequence is DYIIIGAGSAGNTLAARLTEDAGVTVLLLE. His477 acts as the Proton acceptor in catalysis.

This sequence belongs to the GMC oxidoreductase family. It depends on FAD as a cofactor.

It catalyses the reaction choline + A = betaine aldehyde + AH2. It carries out the reaction betaine aldehyde + NAD(+) + H2O = glycine betaine + NADH + 2 H(+). The protein operates within amine and polyamine biosynthesis; betaine biosynthesis via choline pathway; betaine aldehyde from choline (cytochrome c reductase route): step 1/1. In terms of biological role, involved in the biosynthesis of the osmoprotectant glycine betaine. Catalyzes the oxidation of choline to betaine aldehyde and betaine aldehyde to glycine betaine at the same rate. This is Oxygen-dependent choline dehydrogenase from Pseudomonas syringae pv. tomato (strain ATCC BAA-871 / DC3000).